The primary structure comprises 171 residues: Protein phosphatase 1 regulatory subunit 1A (171 aa).

M1 is modified (N-acetylmethionine). The segment at 1–171 is disordered; that stretch reads MEPDNSPRKI…PLDSQGASLV (171 aa). Positions 9 to 12 are essential for activity; the sequence is KIQF. Basic and acidic residues predominate over residues 19 to 29; it reads PHLDPEAAEQI. A Phosphothreonine modification is found at T35. Residues 42–54 form an essential for activity region; it reads TSDQSSPEIDEDR. 4 positions are modified to phosphoserine: S43, S46, S47, and S67. Residues 122-146 show a composition bias toward polar residues; sequence GSASRPDTPGTAQKSAESNPKTQEQ. The interval 143-171 is interaction with PPP1R15A; it reads TQEQCGVEPRTEDSSAHMLPLDSQGASLV.

Belongs to the protein phosphatase inhibitor 1 family. In terms of assembly, interacts with PPP1R15A. Post-translationally, phosphorylation of Thr-35 is required for activity.

Inhibitor of protein-phosphatase 1. This protein may be important in hormonal control of glycogen metabolism. Hormones that elevate intracellular cAMP increase I-1 activity in many tissues. I-1 activation may impose cAMP control over proteins that are not directly phosphorylated by PKA. Following a rise in intracellular calcium, I-1 is inactivated by calcineurin (or PP2B). Does not inhibit type-2 phosphatases. The polypeptide is Protein phosphatase 1 regulatory subunit 1A (Ppp1r1a) (Mus musculus (Mouse)).